A 614-amino-acid polypeptide reads, in one-letter code: Translation initiation factor IF-2 (614 aa).

The tr-type G domain occupies A115–Y283. A G1 region spans residues G124–T131. A GTP-binding site is contributed by G124 to T131. The tract at residues G149–H153 is G2. A G3 region spans residues D170–G173. Residues D170–H174 and N224–D227 each bind GTP. The segment at N224–D227 is G4. Positions S260–L262 are G5.

This sequence belongs to the TRAFAC class translation factor GTPase superfamily. Classic translation factor GTPase family. IF-2 subfamily.

The protein resides in the cytoplasm. In terms of biological role, one of the essential components for the initiation of protein synthesis. Protects formylmethionyl-tRNA from spontaneous hydrolysis and promotes its binding to the 30S ribosomal subunits. Also involved in the hydrolysis of GTP during the formation of the 70S ribosomal complex. The polypeptide is Translation initiation factor IF-2 (Ureaplasma urealyticum serovar 10 (strain ATCC 33699 / Western)).